We begin with the raw amino-acid sequence, 488 residues long: Glutamyl-tRNA(Gln) amidotransferase subunit A (488 aa).

Active-site charge relay system residues include Lys-77 and Ser-152. The active-site Acyl-ester intermediate is the Ser-176.

The protein belongs to the amidase family. GatA subfamily. In terms of assembly, heterotrimer of A, B and C subunits.

The catalysed reaction is L-glutamyl-tRNA(Gln) + L-glutamine + ATP + H2O = L-glutaminyl-tRNA(Gln) + L-glutamate + ADP + phosphate + H(+). Allows the formation of correctly charged Gln-tRNA(Gln) through the transamidation of misacylated Glu-tRNA(Gln) in organisms which lack glutaminyl-tRNA synthetase. The reaction takes place in the presence of glutamine and ATP through an activated gamma-phospho-Glu-tRNA(Gln). This Streptococcus pyogenes serotype M4 (strain MGAS10750) protein is Glutamyl-tRNA(Gln) amidotransferase subunit A.